A 159-amino-acid polypeptide reads, in one-letter code: Ribosomal RNA large subunit methyltransferase H (159 aa).

S-adenosyl-L-methionine-binding positions include Leu76, Gly108, and 127–132 (FSKMTF).

It belongs to the RNA methyltransferase RlmH family. In terms of assembly, homodimer.

The protein localises to the cytoplasm. The enzyme catalyses pseudouridine(1915) in 23S rRNA + S-adenosyl-L-methionine = N(3)-methylpseudouridine(1915) in 23S rRNA + S-adenosyl-L-homocysteine + H(+). In terms of biological role, specifically methylates the pseudouridine at position 1915 (m3Psi1915) in 23S rRNA. In Bifidobacterium adolescentis (strain ATCC 15703 / DSM 20083 / NCTC 11814 / E194a), this protein is Ribosomal RNA large subunit methyltransferase H.